The sequence spans 1123 residues: Alpha-mannosidase E (1123 aa).

A signal peptide spans 1 to 21 (MNKTKLIKIIFVIGVWILLST). N-linked (GlcNAc...) asparagine glycans are attached at residues N2 and N38. Topologically, residues 22–1072 (FIINIYNENF…KYNRPNHLAL (1051 aa)) are extracellular. Residues H67 and D69 each coordinate Zn(2+). The N-linked (GlcNAc...) asparagine glycan is linked to N140. D150 and H409 together coordinate Zn(2+). D150 acts as the Nucleophile in catalysis. 6 N-linked (GlcNAc...) asparagine glycosylation sites follow: N521, N675, N858, N887, N975, and N990. Residues 1073 to 1093 (ILSLSIGTPAGILIIVIALVV) traverse the membrane as a helical segment. The Cytoplasmic portion of the chain corresponds to 1094–1123 (IYKKRKNRKTLTSSYSLLNLILKDRADSSP).

The protein belongs to the glycosyl hydrolase 38 family. It depends on Zn(2+) as a cofactor.

Its subcellular location is the membrane. It carries out the reaction Hydrolysis of terminal, non-reducing alpha-D-mannose residues in alpha-D-mannosides.. The chain is Alpha-mannosidase E (manE) from Dictyostelium discoideum (Social amoeba).